Here is a 208-residue protein sequence, read N- to C-terminus: MAEEEEPKPPPLRRKSSANYRGYAVEPHAKRQSKISASRKLQLKTLLLQRAKRDLEREEQERAGEKQRHLGELCPPPELDGLGVAQLQELCRELHARIGRVDEERYDMGTRVSKNMAEMEELRLRVAGGRFVRPALRRVRLSADAMMAALLGSKHRVGTDLRAGLRQVRKDEAEKESREVGDWRKNVDALSGMEGRKKKFEAPGGGQS.

Disordered stretches follow at residues M1–A37, D54–C74, and V168–S208. At A2 the chain carries N-acetylalanine. The interval H28–L73 is involved in binding TNC. Basic and acidic residues-rich tracts occupy residues D54–G71 and V168–V187.

Belongs to the troponin I family. As to quaternary structure, binds to actin and tropomyosin.

Its function is as follows. Troponin I is the inhibitory subunit of troponin, the thin filament regulatory complex which confers calcium-sensitivity to striated muscle actomyosin ATPase activity. In Coturnix japonica (Japanese quail), this protein is Troponin I, cardiac muscle (TNNI3).